Reading from the N-terminus, the 500-residue chain is Glycerol kinase (500 aa).

T11 serves as a coordination point for ADP. ATP is bound by residues T11, T12, and S13. T11 is a binding site for sn-glycerol 3-phosphate. An ADP-binding site is contributed by R15. Residues R81, E82, Y133, and D242 each coordinate sn-glycerol 3-phosphate. 5 residues coordinate glycerol: R81, E82, Y133, D242, and Q243. Residues T264 and G307 each contribute to the ADP site. Residues T264, G307, Q311, and G411 each contribute to the ATP site. ADP is bound at residue G411.

This sequence belongs to the FGGY kinase family.

The enzyme catalyses glycerol + ATP = sn-glycerol 3-phosphate + ADP + H(+). It participates in polyol metabolism; glycerol degradation via glycerol kinase pathway; sn-glycerol 3-phosphate from glycerol: step 1/1. Its activity is regulated as follows. Inhibited by fructose 1,6-bisphosphate (FBP). Its function is as follows. Key enzyme in the regulation of glycerol uptake and metabolism. Catalyzes the phosphorylation of glycerol to yield sn-glycerol 3-phosphate. In Bradyrhizobium sp. (strain BTAi1 / ATCC BAA-1182), this protein is Glycerol kinase.